The chain runs to 812 residues: Valine--tRNA ligase (812 aa).

Residues 47–57 (PTISGQLHIGH) carry the 'HIGH' region motif. The 'KMSKS' region motif lies at 536-540 (KMSKS). Residue Lys-539 coordinates ATP.

This sequence belongs to the class-I aminoacyl-tRNA synthetase family. ValS type 2 subfamily. In terms of assembly, monomer.

It localises to the cytoplasm. It catalyses the reaction tRNA(Val) + L-valine + ATP = L-valyl-tRNA(Val) + AMP + diphosphate. Its function is as follows. Catalyzes the attachment of valine to tRNA(Val). As ValRS can inadvertently accommodate and process structurally similar amino acids such as threonine, to avoid such errors, it has a 'posttransfer' editing activity that hydrolyzes mischarged Thr-tRNA(Val) in a tRNA-dependent manner. This Ehrlichia ruminantium (strain Gardel) protein is Valine--tRNA ligase.